Reading from the N-terminus, the 61-residue chain is Large ribosomal subunit protein bL32 (61 aa).

The tract at residues 1 to 20 is disordered; sequence MAVQKSKPSRAKRGKRRSHD. The span at 7 to 19 shows a compositional bias: basic residues; it reads KPSRAKRGKRRSH.

This sequence belongs to the bacterial ribosomal protein bL32 family.

The sequence is that of Large ribosomal subunit protein bL32 from Buchnera aphidicola subsp. Cinara cedri (strain Cc).